A 309-amino-acid polypeptide reads, in one-letter code: Ribosomal RNA small subunit methyltransferase H (309 aa).

S-adenosyl-L-methionine-binding positions include 34–36 (GGH), Asp-54, Phe-80, Asp-102, and Gln-109.

It belongs to the methyltransferase superfamily. RsmH family.

The protein resides in the cytoplasm. The catalysed reaction is cytidine(1402) in 16S rRNA + S-adenosyl-L-methionine = N(4)-methylcytidine(1402) in 16S rRNA + S-adenosyl-L-homocysteine + H(+). Its function is as follows. Specifically methylates the N4 position of cytidine in position 1402 (C1402) of 16S rRNA. This chain is Ribosomal RNA small subunit methyltransferase H, found in Cellvibrio japonicus (strain Ueda107) (Pseudomonas fluorescens subsp. cellulosa).